Consider the following 295-residue polypeptide: Acetylglutamate kinase (295 aa).

Residues 66 to 67 (GG), arginine 88, and asparagine 193 each bind substrate.

This sequence belongs to the acetylglutamate kinase family. ArgB subfamily.

Its subcellular location is the cytoplasm. The catalysed reaction is N-acetyl-L-glutamate + ATP = N-acetyl-L-glutamyl 5-phosphate + ADP. It participates in amino-acid biosynthesis; L-arginine biosynthesis; N(2)-acetyl-L-ornithine from L-glutamate: step 2/4. Catalyzes the ATP-dependent phosphorylation of N-acetyl-L-glutamate. This is Acetylglutamate kinase from Sinorhizobium fredii (strain NBRC 101917 / NGR234).